The primary structure comprises 331 residues: Serpentine receptor class alpha-9 (331 aa).

7 helical membrane-spanning segments follow: residues 26 to 46, 58 to 78, 104 to 124, 142 to 162, 189 to 209, 238 to 258, and 275 to 295; these read IDLL…QLVL, LILE…IEAI, YLKV…GLMI, IIGF…GKLF, YFTV…LLKI, VCFL…GVGA, and LCVV…LLLI.

Belongs to the nematode receptor-like protein sra family.

It localises to the membrane. The polypeptide is Serpentine receptor class alpha-9 (sra-9) (Caenorhabditis elegans).